Here is a 778-residue protein sequence, read N- to C-terminus: IQ domain-containing protein E (778 aa).

Disordered stretches follow at residues 1 to 71 (MSLG…LSSR) and 83 to 108 (SSKQ…HPPS). Positions 37–49 (KPPSTSPKSPYYS) are enriched in low complexity. Residues 83-101 (SSKQGSVAQPPSPTLTSEH) show a composition bias toward polar residues. A coiled-coil region spans residues 157–323 (LHMQKSDVDL…DLDRMLSNSP (167 aa)). At S322 the chain carries Phosphoserine. 4 disordered regions span residues 348-392 (KKVS…EDLP), 443-462 (ETAR…LREE), 474-529 (EEAK…SEER), and 573-612 (LVRS…AEEN). A compositionally biased stretch (low complexity) spans 352-362 (SSESPKQSTSE). A coiled-coil region spans residues 398-486 (EEQEHLQGTV…KREEKNSFVA (89 aa)). IQ domains follow at residues 553–582 (LDEA…PDSR) and 615–644 (QEEA…REIA). Low complexity predominate over residues 581–598 (SRSPSLPGLLSPLNQSSP). Residues 651–662 (TVSLTPSGSASP) show a composition bias toward polar residues. The interval 651-778 (TVSLTPSGSA…LPRKKSPSPF (128 aa)) is disordered. A Phosphoserine modification is found at S661. A compositionally biased stretch (basic and acidic residues) spans 672–686 (IRKELCASEELRETS). Pro residues predominate over residues 739–752 (PSPPELQPLSPPPV).

Component of the EvC complex composed of EFCAB7, IQCE, EVC2 and EVC; built from two subcomplexes, EVC2:EVC and EFCAB7:IQCE. Interacts (via N-terminus) with EFCAB7 (via EF-hands 1 and 2); this interaction anchors the EVC-EVC2 complex in a signaling microdomain at the base of cilia and stimulates the Hedgehog (Hh) pathway. Interacts with EVC2 (via N-terminal end). Interacts with EVC.

It localises to the cell projection. The protein resides in the cilium membrane. Functionally, component of the EvC complex that positively regulates ciliary Hedgehog (Hh) signaling. Required for proper limb morphogenesis. This Mus musculus (Mouse) protein is IQ domain-containing protein E (Iqce).